The primary structure comprises 143 residues: Large ribosomal subunit protein uL11 (143 aa).

Belongs to the universal ribosomal protein uL11 family. As to quaternary structure, part of the ribosomal stalk of the 50S ribosomal subunit. Interacts with L10 and the large rRNA to form the base of the stalk. L10 forms an elongated spine to which L12 dimers bind in a sequential fashion forming a multimeric L10(L12)X complex. Post-translationally, one or more lysine residues are methylated.

Forms part of the ribosomal stalk which helps the ribosome interact with GTP-bound translation factors. This chain is Large ribosomal subunit protein uL11, found in Laribacter hongkongensis (strain HLHK9).